The chain runs to 261 residues: 4-phosphopantoate--beta-alanine ligase (261 aa).

Residues Arg-17, Arg-39, 181 to 183 (DLN), 187 to 188 (RS), and 199 to 200 (NI) contribute to the ATP site.

This sequence belongs to the archaeal phosphopantothenate synthetase family. As to quaternary structure, homodimer.

It catalyses the reaction (R)-4-phosphopantoate + beta-alanine + ATP = (R)-4'-phosphopantothenate + AMP + diphosphate + H(+). It participates in cofactor biosynthesis; coenzyme A biosynthesis. With respect to regulation, activity is not affected by 4'-phosphopantothenate or CoA/acetyl-CoA. Catalyzes the condensation of (R)-4-phosphopantoate and beta-alanine to 4'-phosphopantothenate in the CoA biosynthesis pathway. Cannot use (R)-pantoate as substrate and thus does not display pantothenate synthetase (PS) activity. Displays strict specificity for its natural substrates, 4-phosphopantoate, ATP and beta-alanine. This Thermococcus kodakarensis (strain ATCC BAA-918 / JCM 12380 / KOD1) (Pyrococcus kodakaraensis (strain KOD1)) protein is 4-phosphopantoate--beta-alanine ligase.